A 601-amino-acid chain; its full sequence is Glutathione-regulated potassium-efflux system protein KefB (601 aa).

Helical transmembrane passes span 4-24 (SDLLLAGVLFLFAAVIAVPLA), 29-49 (IGAVLGYLLAGIAIGPWGLGF), 55-75 (EILHFSELGVVFLMFIIGLEL), 87-107 (IFGVGAAQVMLSAAILGGLLM), 115-135 (AAVVGGIGLAMSSTAMALQLM), 152-172 (VLLFQDLAVIPALALVPLLAG), 177-197 (HVNWLTVGMKVLAFAGMLIGG), 207-227 (FIASSGVREVFTAATLLLVLG), 230-250 (LFMEALGLSMALGTFIAGVLL), 268-288 (GLLLGLFFISVGMALNLGVLY), 291-311 (LLWVAVSVAVLVAVKMLVLYL), 326-346 (FAGVLSQGGEFAFVLFSLPAS), and 356-376 (ALLLVAVTLSMMTTPLLMKGI). The region spanning 400–519 (KPQVIIVGFG…AGVTQFSRET (120 aa)) is the RCK N-terminal domain.

It belongs to the monovalent cation:proton antiporter 2 (CPA2) transporter (TC 2.A.37) family. KefB subfamily. In terms of assembly, interacts with the regulatory subunit KefG.

Its subcellular location is the cell inner membrane. In terms of biological role, pore-forming subunit of a potassium efflux system that confers protection against electrophiles. Catalyzes K(+)/H(+) antiport. The sequence is that of Glutathione-regulated potassium-efflux system protein KefB from Klebsiella pneumoniae subsp. pneumoniae (strain ATCC 700721 / MGH 78578).